A 320-amino-acid polypeptide reads, in one-letter code: Eukaryotic translation initiation factor 3 subunit G (320 aa).

The disordered stretch occupies residues 1 to 59 (MPTGDFDSKPSWADQVEEEGEDDKCVTSELLKGIPLATGDTSPEPELLPGAPLPPPKEV). A phosphoserine mark is found at Ser-8 and Ser-11. A phosphothreonine mark is found at Thr-38 and Thr-41. 4 positions are modified to phosphoserine: Ser-42, Ser-189, Ser-223, and Ser-264. Positions 209–234 (KTGKYVPPSLRDGASRRGESMQPNRR) are disordered. Residues 221–234 (GASRRGESMQPNRR) are compositionally biased toward basic and acidic residues. The region spanning 239-317 (ATIRVTNLSE…LILNVEWAKP (79 aa)) is the RRM domain.

As to quaternary structure, component of the eukaryotic translation initiation factor 3 (eIF-3) complex, which is composed of 13 subunits: EIF3A, EIF3B, EIF3C, EIF3D, EIF3E, EIF3F, EIF3G, EIF3H, EIF3I, EIF3J, EIF3K, EIF3L and EIF3M. The eIF-3 complex appears to include 3 stable modules: module A is composed of EIF3A, EIF3B, EIF3G and EIF3I; module B is composed of EIF3F, EIF3H, and EIF3M; and module C is composed of EIF3C, EIF3D, EIF3E, EIF3K and EIF3L. EIF3C of module C binds EIF3B of module A and EIF3H of module B, thereby linking the three modules. EIF3J is a labile subunit that binds to the eIF-3 complex via EIF3B. The eIF-3 complex interacts with RPS6KB1 under conditions of nutrient depletion. Mitogenic stimulation leads to binding and activation of a complex composed of MTOR and RPTOR, leading to phosphorylation and release of RPS6KB1 and binding of EIF4B to eIF-3. Interacts (via C-terminus) with AIFM1 (via N-terminus). Interacts with DHX33; the interaction is independent of RNA. Phosphorylated. Phosphorylation is enhanced upon serum stimulation.

Its subcellular location is the cytoplasm. It is found in the nucleus. It localises to the perinuclear region. In terms of biological role, RNA-binding component of the eukaryotic translation initiation factor 3 (eIF-3) complex, which is required for several steps in the initiation of protein synthesis. The eIF-3 complex associates with the 40S ribosome and facilitates the recruitment of eIF-1, eIF-1A, eIF-2:GTP:methionyl-tRNAi and eIF-5 to form the 43S pre-initiation complex (43S PIC). The eIF-3 complex stimulates mRNA recruitment to the 43S PIC and scanning of the mRNA for AUG recognition. The eIF-3 complex is also required for disassembly and recycling of post-termination ribosomal complexes and subsequently prevents premature joining of the 40S and 60S ribosomal subunits prior to initiation. The eIF-3 complex specifically targets and initiates translation of a subset of mRNAs involved in cell proliferation, including cell cycling, differentiation and apoptosis, and uses different modes of RNA stem-loop binding to exert either translational activation or repression. This subunit can bind 18S rRNA. Its function is as follows. (Microbial infection) In case of FCV infection, plays a role in the ribosomal termination-reinitiation event leading to the translation of VP2. The protein is Eukaryotic translation initiation factor 3 subunit G of Homo sapiens (Human).